Here is a 423-residue protein sequence, read N- to C-terminus: Serine incorporator 5 (423 aa).

Topologically, residues 1 to 36 (MSAQCCAGQLACCCGSAGCSLCCDCCPRIRQSLSTR) are extracellular. The helical transmembrane segment at 37–57 (FMYALYFILVVVLCCIMMSTT) threads the bilayer. The Cytoplasmic portion of the chain corresponds to 58 to 89 (VAHKMKEHIPFFEDMCKGIKAGDTCEKLVGYS). Residues 90–110 (AVYRVCFGMACFFFIFCLLTL) form a helical membrane-spanning segment. The Extracellular segment spans residues 111–124 (KINNSKSCRAHIHN). A glycan (N-linked (GlcNAc...) asparagine) is linked at asparagine 113. Residues 125–145 (GFWFFKLLLLGAMCSGAFFIP) form a helical membrane-spanning segment. The Cytoplasmic portion of the chain corresponds to 146 to 156 (DQDTFLNAWRY). Residues 157 to 177 (VGAVGGFLFIGIQLLLLVEFA) form a helical membrane-spanning segment. The Extracellular segment spans residues 178–198 (HKWNKNWTAGTASNKLWYASL). Asparagine 183 is a glycosylation site (N-linked (GlcNAc...) asparagine). The helical transmembrane segment at 199 to 219 (ALVTLIMYSIATGGLVLMAVF) threads the bilayer. The Cytoplasmic portion of the chain corresponds to 220–230 (YTQKDSCMENK). A helical membrane pass occupies residues 231 to 251 (ILLGVNGGLCLLISLVAISPW). Topologically, residues 252–258 (VQNRQPH) are extracellular. A helical transmembrane segment spans residues 259–279 (SGLLQSGVISCYVTYLTFSAL). Residues 280 to 311 (SSKPAEVVLDEHGKNVTICVPDFGQDLYRDEN) are Cytoplasmic-facing. Residues 312–332 (LVTILGTSLLIGCILYSCLTS) form a helical membrane-spanning segment. Topologically, residues 333 to 385 (TTRSSSDALQGRYAAPELEIARCCFCFSPGGEDTEEQQPGKEGPRVIYDEKKG) are extracellular. The chain crosses the membrane as a helical span at residues 386-406 (TVYIYSYFHFVFFLASLYVMM). Over 407 to 423 (TVTNWFNHVRSAFHLLP) the chain is Cytoplasmic.

The protein belongs to the TDE1 family. In terms of tissue distribution, highly expressed in placenta, skeletal muscle, spleen, thymus, testis and peripheral leukocyte and is expressed weakly in the heart, liver and fetal brain.

The protein localises to the cell membrane. Its subcellular location is the cytoplasm. It localises to the perinuclear region. The catalysed reaction is a 1,2-diacyl-sn-glycero-3-phospho-L-serine(in) = a 1,2-diacyl-sn-glycero-3-phospho-L-serine(out). The enzyme catalyses a 1,2-diacyl-sn-glycero-3-phosphocholine(in) = a 1,2-diacyl-sn-glycero-3-phosphocholine(out). It carries out the reaction a 1,2-diacyl-sn-glycero-3-phosphoethanolamine(in) = a 1,2-diacyl-sn-glycero-3-phosphoethanolamine(out). Its function is as follows. Restriction factor required to restrict infectivity of lentiviruses, such as HIV-1: acts by inhibiting an early step of viral infection. Impairs the penetration of the viral particle into the cytoplasm. Non-ATP-dependent, non-specific lipid transporter for phosphatidylserine, phosphatidylcholine, and phosphatidylethanolamine. Functions as a scramblase that flips lipids in both directions across the membrane. Phospholipid scrambling results in HIV-1 surface exposure of phosphatidylserine and loss of membrane asymmetry, which leads to changes in HIV-1 Env conformation and loss of infectivity. Enhances the incorporation of serine into phosphatidylserine and sphingolipids. May play a role in providing serine molecules for the formation of myelin glycosphingolipids in oligodendrocytes. In Homo sapiens (Human), this protein is Serine incorporator 5.